The primary structure comprises 353 residues: Photosystem II D2 protein (353 aa).

The residue at position 2 (Thr2) is an N-acetylthreonine. Phosphothreonine is present on Thr2. A helical transmembrane segment spans residues 41–61; the sequence is CAYFALGGWFTGTTFVTSWYT. His118 is a binding site for chlorophyll a. The chain crosses the membrane as a helical span at residues 125 to 141; the sequence is GFMLRQFELARSVQLRP. Positions 130 and 143 each coordinate pheophytin a. The helical transmembrane segment at 153–166 threads the bilayer; sequence VFVSVFLIYPLGQS. His198 is a binding site for chlorophyll a. The helical transmembrane segment at 208 to 228 threads the bilayer; the sequence is AALLCAIHGATVENTLFEDGD. A plastoquinone is bound by residues His215 and Phe262. His215 provides a ligand contact to Fe cation. A Fe cation-binding site is contributed by His269. A helical transmembrane segment spans residues 279–295; sequence GLWMSALGVVGLALNLR.

The protein belongs to the reaction center PufL/M/PsbA/D family. As to quaternary structure, PSII is composed of 1 copy each of membrane proteins PsbA, PsbB, PsbC, PsbD, PsbE, PsbF, PsbH, PsbI, PsbJ, PsbK, PsbL, PsbM, PsbT, PsbX, PsbY, PsbZ, Psb30/Ycf12, at least 3 peripheral proteins of the oxygen-evolving complex and a large number of cofactors. It forms dimeric complexes. It depends on The D1/D2 heterodimer binds P680, chlorophylls that are the primary electron donor of PSII, and subsequent electron acceptors. It shares a non-heme iron and each subunit binds pheophytin, quinone, additional chlorophylls, carotenoids and lipids. There is also a Cl(-1) ion associated with D1 and D2, which is required for oxygen evolution. The PSII complex binds additional chlorophylls, carotenoids and specific lipids. as a cofactor.

Its subcellular location is the plastid. The protein resides in the chloroplast thylakoid membrane. The enzyme catalyses 2 a plastoquinone + 4 hnu + 2 H2O = 2 a plastoquinol + O2. Photosystem II (PSII) is a light-driven water:plastoquinone oxidoreductase that uses light energy to abstract electrons from H(2)O, generating O(2) and a proton gradient subsequently used for ATP formation. It consists of a core antenna complex that captures photons, and an electron transfer chain that converts photonic excitation into a charge separation. The D1/D2 (PsbA/PsbD) reaction center heterodimer binds P680, the primary electron donor of PSII as well as several subsequent electron acceptors. D2 is needed for assembly of a stable PSII complex. The chain is Photosystem II D2 protein from Lemna minor (Common duckweed).